The primary structure comprises 282 residues: Pantothenate synthetase (282 aa).

Met-30–His-37 is an ATP binding site. The active-site Proton donor is the His-37. Gln-60 serves as a coordination point for (R)-pantoate. Gln-60 lines the beta-alanine pocket. Gly-146–Asp-149 lines the ATP pocket. Gln-152 is a binding site for (R)-pantoate. ATP is bound by residues Ile-175 and Lys-183–Arg-186.

Belongs to the pantothenate synthetase family. As to quaternary structure, homodimer.

It localises to the cytoplasm. The catalysed reaction is (R)-pantoate + beta-alanine + ATP = (R)-pantothenate + AMP + diphosphate + H(+). Its pathway is cofactor biosynthesis; (R)-pantothenate biosynthesis; (R)-pantothenate from (R)-pantoate and beta-alanine: step 1/1. Functionally, catalyzes the condensation of pantoate with beta-alanine in an ATP-dependent reaction via a pantoyl-adenylate intermediate. The protein is Pantothenate synthetase of Campylobacter jejuni subsp. doylei (strain ATCC BAA-1458 / RM4099 / 269.97).